A 480-amino-acid polypeptide reads, in one-letter code: Aspartyl/glutamyl-tRNA(Asn/Gln) amidotransferase subunit B (480 aa).

The protein belongs to the GatB/GatE family. GatB subfamily. Heterotrimer of A, B and C subunits.

The catalysed reaction is L-glutamyl-tRNA(Gln) + L-glutamine + ATP + H2O = L-glutaminyl-tRNA(Gln) + L-glutamate + ADP + phosphate + H(+). It carries out the reaction L-aspartyl-tRNA(Asn) + L-glutamine + ATP + H2O = L-asparaginyl-tRNA(Asn) + L-glutamate + ADP + phosphate + 2 H(+). Its function is as follows. Allows the formation of correctly charged Asn-tRNA(Asn) or Gln-tRNA(Gln) through the transamidation of misacylated Asp-tRNA(Asn) or Glu-tRNA(Gln) in organisms which lack either or both of asparaginyl-tRNA or glutaminyl-tRNA synthetases. The reaction takes place in the presence of glutamine and ATP through an activated phospho-Asp-tRNA(Asn) or phospho-Glu-tRNA(Gln). The chain is Aspartyl/glutamyl-tRNA(Asn/Gln) amidotransferase subunit B from Streptococcus pneumoniae (strain P1031).